The sequence spans 649 residues: MAIFFLPTVLSGFAPHSEEVFKSPARFSWSNLTPSELKNRFVGLSTKTNALGKAYFTLEGHKFMIVGGSIHYFRVPREYWKDRLLKLQACGFNTVTTYIPWNLHEQERGKFDFSEILDLEAYVLLAKTIGLWVILRPGPYICAEVDLGGLPSWLLRNPVTDLRTTNKGFIEAVDKYFDHLIPKILPLQYRHGGPVIAVQVENEYGSFQKDRNYMNYLKKALLKRGIVELLLTSDDKDGIQIGSVNGALTTINMNSFTKDSFIKLHKMQSDKPIMIMEYWTGWYDSWGSKHIEKSAEEIRHTVYKFISYGLSFNMYMFHGGTNFGFINGGRYENHHISVVTSYDYDAVLSEAGDYTEKYFKLRKLFASGSARPLPPLPPLIPKAIYPSVNLSFYLPLFDILPYLNQPVMLHTPVTMENLPINNGSGQPFGLVLYETSICSGGSLFASVHDSAQVFLNDQSIGILDENHEVLQIPKIQGCQLLRILVENQGRINYSWRIQSEQKGLKEVVSIDGLLLTNFTIYSLDMKMSFFKRLRSASWRLAPKTYNGPAFYWGILNAGSSPTDTFLHLPNWHYGFVFINGRNLGRYWDIGPQRTLYLPGPWLHPEDNEVIVFEKIEKGFDIQTRKKPQLQECYETGSGLPDAAGDADPC.

Glu-203 (proton donor) is an active-site residue. Catalysis depends on Glu-277, which acts as the Nucleophile.

Belongs to the glycosyl hydrolase 35 family.

The chain is Beta-galactosidase-1-like protein 3 (Glb1l3) from Mus musculus (Mouse).